Reading from the N-terminus, the 1032-residue chain is Beta-galactosidase (1032 aa).

Substrate is bound by residues Asn100 and Asp198. Asp198 is a Na(+) binding site. Mg(2+)-binding residues include Glu413, His415, and Glu458. Substrate-binding positions include Glu458 and 534–537 (EYAH). Glu458 acts as the Proton donor in catalysis. Glu534 serves as the catalytic Nucleophile. Residue Asn594 participates in Mg(2+) binding. 2 residues coordinate Na(+): Phe598 and Asn601. 2 residues coordinate substrate: Asn601 and Trp1006.

This sequence belongs to the glycosyl hydrolase 2 family. As to quaternary structure, homotetramer. Requires Mg(2+) as cofactor. The cofactor is Na(+).

It catalyses the reaction Hydrolysis of terminal non-reducing beta-D-galactose residues in beta-D-galactosides.. The polypeptide is Beta-galactosidase (Vibrio vulnificus (strain CMCP6)).